A 331-amino-acid chain; its full sequence is 6-phosphogluconolactonase (331 aa).

Lysine 287 is modified (N6-acetyllysine).

This sequence belongs to the cycloisomerase 2 family.

It carries out the reaction 6-phospho-D-glucono-1,5-lactone + H2O = 6-phospho-D-gluconate + H(+). Its pathway is carbohydrate degradation; pentose phosphate pathway; D-ribulose 5-phosphate from D-glucose 6-phosphate (oxidative stage): step 2/3. Catalyzes the hydrolysis of 6-phosphogluconolactone to 6-phosphogluconate. The polypeptide is 6-phosphogluconolactonase (Escherichia coli O6:K15:H31 (strain 536 / UPEC)).